We begin with the raw amino-acid sequence, 91 residues long: Large ribosomal subunit protein bL27 (91 aa).

It belongs to the bacterial ribosomal protein bL27 family.

This chain is Large ribosomal subunit protein bL27, found in Deinococcus deserti (strain DSM 17065 / CIP 109153 / LMG 22923 / VCD115).